The chain runs to 1346 residues: MTSSNEQLVDALRASLKENEELRKESRRRADRRQEPMAIVGMSCRFAGGIRSPEDLWDAVAAGKDLVSEVPEERGWDIDSLYDPVPGRKGTTYVRNAAFLDDAAGFDAAFFGISPREALAMDPQQRQLLEASWEVFERAGIDPASVRGTDVGVYVGCGYQDYAPDIRVAPEGTGGYVVTGNSSAVASGRIAYSLGLEGPAVTVDTACSSSLVALHLALKGLRNGDCSTALVGGVAVLATPGAFIEFSSQQAMAADGRTKGFASAADGLAWGEGVAVLLLERLSDARRKGHRVLAVVRGSAINQDGASNGLTAPHGPSQQHLIRQALADARLTSSDVDVVEGHGTGTRLGDPIEAQALLATYGQGRAPGQPLRLGTLKSNIGHTQAASGVAGVIKMVQALRHGVLPKTLHVDEPTDQVDWSAGSVELLTEAVDWPERPGRLRRAGVSAFGVGGTNAHVVLEEAPAVEESPAVEPPAGGGVVPWPVSAKTSAALDAQIGQLAAYAEDRTDVDPAVAARALVDSRTAMEHRAVAVGDSREALRDALRMPEGLVRGTVTDPGRVAFVFPGQGTQWAGMGAELLDSSPEFAAAMAECETALSPYVDWSLEAVVRQAPSAPTLDRVDVVQPVTFAVMVSLAKVWQHHGITPEAVIGHSQGEIAAAYVAGALTLDDAARVVTLRSKSIAAHLAGKGGMISLALSEEATRQRIENLHGLSIAAVNGPTATVVSGDPTQIQELAQACEADGIRARIIPVDYASHSAHVETIENELADVLAGLSPQTPQVPFFSTLEGTWITEPALDGGYWYRNLRHRVGFAPAVETLATDEGFTHFIEVSAHPVLTMTLPDKVTGLATLRREDGGQHRLTTSLAEAWANGLALDWASLLPATGALSPAVPDLPTYAFQHRSYWISPAGPGEAPAHTASGREAVAETGLAWGPGAEDLDEEGRRSAVLAMVMRQAASVLRCDSPEEVPVDRPLREIGFDSLTAVDFRNRVNRLTGLQLPPTVVFQHPTPVALAERISDELAERNWAVAEPSDHEQAEEEKAAAPAGARSGADTGAGAGMFRALFRQAVEDDRYGEFLDVLAEASAFRPQFASPEACSERLDPVLLAGGPTDRAEGRAVLVGCTGTAANGGPHEFLRLSTSFQEERDFLAVPLPGYGTGTGTGTALLPADLDTALDAQARAILRAAGDAPVVLLGHSGGALLAHELAFRLERAHGAPPAGIVLVDPYPPGHQEPIEVWSRQLGEGLFAGELEPMSDARLLAMGRYARFLAGPRPGRSSAPVLLVRASEPLGDWQEERGDWRAHWDLPHTVADVPGDHFTMMRDHAPAVAEAVLSWLDAIEGIEGAGK.

Residues 3-32 (SSNEQLVDALRASLKENEELRKESRRRADR) are a coiled coil. A Ketosynthase family 3 (KS3) domain is found at 34–461 (QEPMAIVGMS…GTNAHVVLEE (428 aa)). Residues 37–1332 (MAIVGMSCRF…HAPAVAEAVL (1296 aa)) are module 6. Active-site for beta-ketoacyl synthase activity residues include cysteine 207, histidine 342, and histidine 382. Residues 562 to 844 (FVFPGQGTQW…VLTMTLPDKV (283 aa)) are acyltransferase. The active-site Acyl-ester intermediate; for acyltransferase activity is the serine 652. A Carrier domain is found at 945-1020 (SAVLAMVMRQ…ALAERISDEL (76 aa)). Serine 980 carries the post-translational modification O-(pantetheine 4'-phosphoryl)serine. The disordered stretch occupies residues 1028–1050 (AEPSDHEQAEEEKAAAPAGARSG). A compositionally biased stretch (basic and acidic residues) spans 1030-1041 (PSDHEQAEEEKA). Threonine 1125 contacts substrate. Residues 1127–1332 (ANGGPHEFLR…HAPAVAEAVL (206 aa)) form a thioesterase region. The active-site Nucleophile; for thioesterase activity is serine 1196. Positions 1197 and 1224 each coordinate substrate. Histidine 1316 acts as the Proton acceptor; for thioesterase activity in catalysis.

Homodimer. Pikromycin PKS consists of a combination of multimodular (PikAI and PikAII) and monomodular (PikAIII and PikAIV) polypeptides each coding for a functional synthase subunit which participates in 1 (monomodular) or 2 (multimodular) of the six FAS-like elongation steps required for formation of the polyketide. Module 1, 2, 3, 4, 5, and 6 participating in biosynthesis steps 1, 2, 3, 4, 5, and 6, respectively. Requires pantetheine 4'-phosphate as cofactor.

The enzyme catalyses 5 (S)-methylmalonyl-CoA + malonyl-CoA + 5 NADPH + 11 H(+) = 10-deoxymethynolide + 6 CO2 + 5 NADP(+) + 6 CoA + 2 H2O. It catalyses the reaction 6 (S)-methylmalonyl-CoA + malonyl-CoA + 5 NADPH + 12 H(+) = narbonolide + 7 CO2 + 5 NADP(+) + 7 CoA + 2 H2O. It participates in antibiotic biosynthesis. Its activity is regulated as follows. Irreversibly inhibited by (2S,3R,4S)-2,4-dihydroxy-3-methylhexyl-phosphonic acid and (3R,4S)-4-hydroxy-3-methyl-2-oxohexyl-phosphonic acid. Functionally, involved in the biosynthesis of 12- and 14-membered ring macrolactone antibiotics such as methymycin and neomethymycin, and pikromycin and narbomycin, respectively. Component of the pikromycin PKS which catalyzes the biosynthesis of both precursors 10-deoxymethynolide (12-membered ring macrolactone) and narbonolide (14-membered ring macrolactone). Chain elongation through PikAI, PikAII and PikAIII followed by thioesterase catalyzed termination results in the production of 10-deoxymethynolide, while continued elongation through PikAIV, followed by thioesterase (TE) catalyzed cyclization results in the biosynthesis of the narbonolide. The thioesterase can use a series of diketide-N-acetylcysteamine (SNAC) thioesters, but has a strong preference for the 2-methyl-3-ketopentanoyl-SNAC over the stereoisomers of 2-methyl-3-hydroxyacyl-SNAC. This Streptomyces venezuelae protein is Pikromycin polyketide synthase component PikAIV.